Here is a 179-residue protein sequence, read N- to C-terminus: Large ribosomal subunit protein uL5 (179 aa).

Belongs to the universal ribosomal protein uL5 family. In terms of assembly, part of the 50S ribosomal subunit; part of the 5S rRNA/L5/L18/L25 subcomplex. Contacts the 5S rRNA and the P site tRNA. Forms a bridge to the 30S subunit in the 70S ribosome.

Its function is as follows. This is one of the proteins that bind and probably mediate the attachment of the 5S RNA into the large ribosomal subunit, where it forms part of the central protuberance. In the 70S ribosome it contacts protein S13 of the 30S subunit (bridge B1b), connecting the 2 subunits; this bridge is implicated in subunit movement. Contacts the P site tRNA; the 5S rRNA and some of its associated proteins might help stabilize positioning of ribosome-bound tRNAs. The sequence is that of Large ribosomal subunit protein uL5 from Geobacillus sp. (strain WCH70).